Consider the following 240-residue polypeptide: Protein FAM246C (240 aa).

Disordered stretches follow at residues 1–117 and 161–240; these read MAEP…WRSA and LPAA…TRAA. Composition is skewed to basic and acidic residues over residues 19-31 and 60-74; these read EVLRRGTGRRRDP and AASRSEVPRLLKLVE. Positions 165 to 175 are enriched in pro residues; it reads SPAPSPAPRPA. The span at 176 to 187 shows a compositional bias: low complexity; it reads ARPCRGRSAPLA.

Belongs to the FAM246 family.

The protein is Protein FAM246C of Homo sapiens (Human).